The primary structure comprises 200 residues: MPEKLNTSARRATVTRTTKETDITATIDLDGSGTGNISSGVLFLDHMLTNFSRHSGIDITLDCKGDTEVDDHHSVEDIALVLGSAFLQSLGSKTGIQRYGWAMIPMDETLARCAVDLGGRSYCVFSAEFKRPAILGFSTEMVEHFFVSLSRTMQANIHLAIMEGKNTHHMIEAMFKAFAYAMKMAVAVTGKELPSTKGTL.

Belongs to the imidazoleglycerol-phosphate dehydratase family.

Its subcellular location is the cytoplasm. It catalyses the reaction D-erythro-1-(imidazol-4-yl)glycerol 3-phosphate = 3-(imidazol-4-yl)-2-oxopropyl phosphate + H2O. It functions in the pathway amino-acid biosynthesis; L-histidine biosynthesis; L-histidine from 5-phospho-alpha-D-ribose 1-diphosphate: step 6/9. In Chlorobium limicola (strain DSM 245 / NBRC 103803 / 6330), this protein is Imidazoleglycerol-phosphate dehydratase.